Consider the following 367-residue polypeptide: Serine O-succinyltransferase (367 aa).

In terms of domain architecture, AB hydrolase-1 spans 41 to 351 (NAVLILTGLS…SPQGHDAFLV (311 aa)). Residues 48 to 51 (GLSP) form an important for substrate specificity region. Residue serine 146 is the Nucleophile of the active site. Residue arginine 215 participates in substrate binding. Residues aspartate 313 and histidine 346 contribute to the active site. Aspartate 347 is a binding site for substrate.

It belongs to the AB hydrolase superfamily. MetX family. In terms of assembly, homodimer.

Its subcellular location is the cytoplasm. It catalyses the reaction succinyl-CoA + L-serine = O-succinyl-L-serine + CoA. It carries out the reaction L-homoserine + succinyl-CoA = O-succinyl-L-homoserine + CoA. It participates in amino-acid biosynthesis; L-cysteine biosynthesis; L-cysteine from L-serine: step 1/2. Transfers a succinyl group from succinyl-CoA to L-serine, forming succinyl-L-serine. In vitro, also has homoserine succinyl transferase activity. This is Serine O-succinyltransferase from Frateuria aurantia (strain ATCC 33424 / DSM 6220 / KCTC 2777 / LMG 1558 / NBRC 3245 / NCIMB 13370) (Acetobacter aurantius).